We begin with the raw amino-acid sequence, 209 residues long: Cytochrome bo(3) ubiquinol oxidase subunit 3 (209 aa).

At 1–29 (MSTAVLNKHLADAHEVGHDHDHAHDSGGN) the chain is on the cytoplasmic side. The chain crosses the membrane as a helical span at residues 30–50 (TVFGFWLYLMTDCVLFASVFA). The Periplasmic segment spans residues 51–72 (TYAVLVHHTAGGPSGKDIFELP). A helical membrane pass occupies residues 73 to 93 (YVLVETAILLVSSCTYGLAML). At 94 to 102 (SAHKGAKGQ) the chain is on the cytoplasmic side. Residues 103–123 (AIAWLGVTFLLGAAFIGMEIN) traverse the membrane as a helical segment. At 124–143 (EFHHLIAEGFGPSRSAFLSS) the chain is on the periplasmic side. Residues 144–164 (FFTLVGMHGLHVSAGLLWMLV) traverse the membrane as a helical segment. The Cytoplasmic portion of the chain corresponds to 165–186 (LMAQIWTRGLTAQNNTRMMCLS). Residues 187-207 (LFWHFLDIVWICVFTVVYLMG) form a helical membrane-spanning segment. At 208–209 (AL) the chain is on the periplasmic side.

This sequence belongs to the cytochrome c oxidase subunit 3 family. As to quaternary structure, heterooctamer of two A chains, two B chains, two C chains and two D chains.

It localises to the cell inner membrane. Its function is as follows. Cytochrome bo(3) ubiquinol terminal oxidase is the component of the aerobic respiratory chain of E.coli that predominates when cells are grown at high aeration. Has proton pump activity across the membrane in addition to electron transfer, pumping 2 protons/electron. The chain is Cytochrome bo(3) ubiquinol oxidase subunit 3 (cyoC) from Pseudomonas aeruginosa (strain ATCC 15692 / DSM 22644 / CIP 104116 / JCM 14847 / LMG 12228 / 1C / PRS 101 / PAO1).